A 383-amino-acid polypeptide reads, in one-letter code: Lipid-A-disaccharide synthase (383 aa).

The protein belongs to the LpxB family.

It carries out the reaction a lipid X + a UDP-2-N,3-O-bis[(3R)-3-hydroxyacyl]-alpha-D-glucosamine = a lipid A disaccharide + UDP + H(+). The protein operates within bacterial outer membrane biogenesis; LPS lipid A biosynthesis. Its function is as follows. Condensation of UDP-2,3-diacylglucosamine and 2,3-diacylglucosamine-1-phosphate to form lipid A disaccharide, a precursor of lipid A, a phosphorylated glycolipid that anchors the lipopolysaccharide to the outer membrane of the cell. The sequence is that of Lipid-A-disaccharide synthase from Anaeromyxobacter dehalogenans (strain 2CP-1 / ATCC BAA-258).